Reading from the N-terminus, the 140-residue chain is Iron sulfur cluster assembly protein 1 (140 aa).

This sequence belongs to the NifU family. In terms of assembly, component of the core Fe-S cluster (ISC) assembly machinery. It depends on [2Fe-2S] cluster as a cofactor.

It localises to the mitosome matrix. The protein operates within cofactor biosynthesis; iron-sulfur cluster biosynthesis. Its function is as follows. Scaffold protein for the de novo synthesis of iron-sulfur (Fe-S) clusters within mitosomes, which is required for maturation of both [2Fe-2S] and [4Fe-4S] proteins. First, a [2Fe-2S] cluster is transiently assembled on the scaffold protein ISU1. In a second step, the cluster is released from ISU1, transferred to a glutaredoxin, followed by the formation of [2Fe-2S] proteins, the synthesis of [4Fe-4S] clusters and their target-specific insertion into the recipient apoproteins. Cluster assembly on ISU1 depends on the function of the cysteine desulfurase complex NFS1-ISD11, which serves as the sulfur donor for cluster synthesis, the iron-binding protein frataxin as the putative iron donor, and the electron transfer chain comprised of ferredoxin reductase and ferredoxin, which receive their electrons from NADH. The protein is Iron sulfur cluster assembly protein 1 (ISU1) of Encephalitozoon cuniculi (strain GB-M1) (Microsporidian parasite).